A 206-amino-acid chain; its full sequence is Large ribosomal subunit protein uL4 (206 aa).

The tract at residues 46 to 78 (GNRAQKDREQVKHTTKKPWRQKGTGRARAGMSS) is disordered. Over residues 58–70 (HTTKKPWRQKGTG) the composition is skewed to basic residues.

This sequence belongs to the universal ribosomal protein uL4 family. In terms of assembly, part of the 50S ribosomal subunit.

In terms of biological role, one of the primary rRNA binding proteins, this protein initially binds near the 5'-end of the 23S rRNA. It is important during the early stages of 50S assembly. It makes multiple contacts with different domains of the 23S rRNA in the assembled 50S subunit and ribosome. Forms part of the polypeptide exit tunnel. This Burkholderia lata (strain ATCC 17760 / DSM 23089 / LMG 22485 / NCIMB 9086 / R18194 / 383) protein is Large ribosomal subunit protein uL4.